Reading from the N-terminus, the 178-residue chain is uncharacterized protein (178 aa).

This is an uncharacterized protein from Bacillus subtilis (strain 168).